A 477-amino-acid polypeptide reads, in one-letter code: Bifunctional protein HldE (477 aa).

Residues 1–318 form a ribokinase region; it reads MKVTLPEFER…ENAVRGRAET (318 aa). 195–198 is a binding site for ATP; the sequence is NLSE. Residue D264 is part of the active site. The interval 344 to 477 is cytidylyltransferase; the sequence is MTNGVFDILH…IKKIQKDSDK (134 aa).

The protein in the N-terminal section; belongs to the carbohydrate kinase PfkB family. In the C-terminal section; belongs to the cytidylyltransferase family. Homodimer.

It catalyses the reaction D-glycero-beta-D-manno-heptose 7-phosphate + ATP = D-glycero-beta-D-manno-heptose 1,7-bisphosphate + ADP + H(+). It carries out the reaction D-glycero-beta-D-manno-heptose 1-phosphate + ATP + H(+) = ADP-D-glycero-beta-D-manno-heptose + diphosphate. The protein operates within nucleotide-sugar biosynthesis; ADP-L-glycero-beta-D-manno-heptose biosynthesis; ADP-L-glycero-beta-D-manno-heptose from D-glycero-beta-D-manno-heptose 7-phosphate: step 1/4. Its pathway is nucleotide-sugar biosynthesis; ADP-L-glycero-beta-D-manno-heptose biosynthesis; ADP-L-glycero-beta-D-manno-heptose from D-glycero-beta-D-manno-heptose 7-phosphate: step 3/4. In terms of biological role, catalyzes the phosphorylation of D-glycero-D-manno-heptose 7-phosphate at the C-1 position to selectively form D-glycero-beta-D-manno-heptose-1,7-bisphosphate. Catalyzes the ADP transfer from ATP to D-glycero-beta-D-manno-heptose 1-phosphate, yielding ADP-D-glycero-beta-D-manno-heptose. The chain is Bifunctional protein HldE from Klebsiella pneumoniae subsp. pneumoniae (strain ATCC 700721 / MGH 78578).